The chain runs to 416 residues: S-adenosylmethionine synthase (416 aa).

Residue histidine 14 participates in ATP binding. Residue aspartate 16 coordinates Mg(2+). Glutamate 42 is a K(+) binding site. L-methionine is bound by residues glutamate 55 and glutamine 98. The tract at residues 98 to 108 (QSADINQGVDR) is flexible loop. ATP contacts are provided by residues 164–166 (DAK), 240–241 (KF), aspartate 249, 255–256 (RK), alanine 272, and lysine 276. Aspartate 249 lines the L-methionine pocket. Lysine 280 contacts L-methionine.

It belongs to the AdoMet synthase family. Homotetramer; dimer of dimers. Mg(2+) serves as cofactor. The cofactor is K(+).

It localises to the cytoplasm. The catalysed reaction is L-methionine + ATP + H2O = S-adenosyl-L-methionine + phosphate + diphosphate. It participates in amino-acid biosynthesis; S-adenosyl-L-methionine biosynthesis; S-adenosyl-L-methionine from L-methionine: step 1/1. In terms of biological role, catalyzes the formation of S-adenosylmethionine (AdoMet) from methionine and ATP. The overall synthetic reaction is composed of two sequential steps, AdoMet formation and the subsequent tripolyphosphate hydrolysis which occurs prior to release of AdoMet from the enzyme. The chain is S-adenosylmethionine synthase from Flavobacterium psychrophilum (strain ATCC 49511 / DSM 21280 / CIP 103535 / JIP02/86).